Here is a 194-residue protein sequence, read N- to C-terminus: Large ribosomal subunit protein bL25 (194 aa).

The protein belongs to the bacterial ribosomal protein bL25 family. CTC subfamily. As to quaternary structure, part of the 50S ribosomal subunit; part of the 5S rRNA/L5/L18/L25 subcomplex. Contacts the 5S rRNA. Binds to the 5S rRNA independently of L5 and L18.

In terms of biological role, this is one of the proteins that binds to the 5S RNA in the ribosome where it forms part of the central protuberance. The chain is Large ribosomal subunit protein bL25 from Parabacteroides distasonis (strain ATCC 8503 / DSM 20701 / CIP 104284 / JCM 5825 / NCTC 11152).